The following is a 485-amino-acid chain: FAD-dependent monooxygenase elcH (485 aa).

An N-terminal signal peptide occupies residues 1–19 (MFTLRSLAILAVFAATALA). Residues Asp-59 and Gly-73 each contribute to the FAD site. Asn-126, Asn-147, and Asn-157 each carry an N-linked (GlcNAc...) asparagine glycan.

It belongs to the paxM FAD-dependent monooxygenase family. It depends on FAD as a cofactor.

It functions in the pathway secondary metabolite biosynthesis. Its function is as follows. FAD-dependent monooxygenase; part of the gene cluster that mediates the biosynthesis of elsinochrome C, a perelyenequinone phytotoxin structurally similar to cercosporin. The first step of elsinochrome C biosynthesis is performed by the polyketide synthase elcA which catalyzes the formation of nor-toralactone. The starter unit acyltransferase (SAT) domain of elcA initiates polyketide extension by the selective utilization of acetyl-CoA, which is elongated to the heptaketide in the beta-ketoacyl synthase (KS) domain by successive condensations with six malonyl units introduced by the malonyl acyltransferase (MAT) domain. The product template (PT) domain catalyzes C4-C9 and C2-C11 aldol cyclizations and dehydrations to a trihydroxynaphthalene, which is thought to be delivered to the thioesterase (TE) domain for product release. The bifunctional enzyme elcB then methylates nor-toralactone to toralactone before conducting an unusual oxidative aromatic ring opening. The next step in perylenequinone biosynthesis is an O-methylation at the nascent OH-6 of the elcB product performed by the O-methyltransferase elcD. The oxidative coupling of the two monomeric naphthol units in perylenequinone biosynthesis is catalyzed by the FAD-dependent monooxygenase elcE and the multicopper oxidase elcG. ElcG might catalyze the first intermolecular coupling in a regio- and stereo-selective manner via a phenol radical coupling mechanism and the elcE could forge the second C-C bond intramolecularly via a hydride transfer mechanism. The fasciclin domain-containing protein elcF might also play a role duting this step. The last piece of the puzzle in the biosynthesis of elsinochrome C is the additional annulation by enolate coupling to afford the dihydrobenzo(ghi)perylenequinone system, catalyzed by the FAD-dependent monooxygenase elcH. The chain is FAD-dependent monooxygenase elcH from Phaeosphaeria nodorum (strain SN15 / ATCC MYA-4574 / FGSC 10173) (Glume blotch fungus).